The following is a 525-amino-acid chain: MDPSSKSPDDDDLRPEAEAARRPQPQPQPREWRFAQVFGERAAGEDVQEVDIISAIEFDKSGDHLATGDRGGRVVLFERTDSRDSASRSELERQDYPIARHPEFRYKTEFQSHEPEFDYLKSLEIEEKINKIKWCQTANNALFLLSTNDKTIKYWKVQERKVKRISVMNLNTSQSSGNGTTSSSSSSSSRAILPNGGCSEKLYNFPNNDLLFPPGGCTSLRLPVVVTGQDLNLVPRCRRVYSHAHDYHINSISNNSDGETYISADDLRINLWNLEISNQSFNIVDVKPANMEDLTEVITCAEFHPTHCNTLAYSSSKGSIRLIDLRQSALCDNHAKLFEEHEAPGSRSFFTEIIASVSDIKFARDGRHILSRDYMTLKLWDINMDSGPVATFQVHEYLRPKLCDLYENDSIFDKFECCLSGDGLRVATGSYSNLFRVFGCTPGSAEATTLEASRNPMRRQVANPTRPARTLTSLTRAVRRGGENPGVDANGNSYDLSTKLLHLAWHPTENSIACAAANSLYMYYA.

The segment at 1–30 (MDPSSKSPDDDDLRPEAEAARRPQPQPQPR) is disordered. 2 WD repeats span residues 48-87 (QEVD…DSAS) and 124-165 (EIEE…VKRI). The interval 169–191 (NLNTSQSSGNGTTSSSSSSSSRA) is disordered. Low complexity predominate over residues 171–189 (NTSQSSGNGTTSSSSSSSS). 4 WD repeats span residues 244-282 (AHDY…QSFN), 293-333 (DLTE…LCDN), 352-390 (EIIA…GPVA), and 495-525 (DLST…MYYA).

Belongs to the phosphatase 2A regulatory subunit B family. PP2A consists of a common heteromeric enzyme, composed of a catalytic subunit (subunits C), a constant regulatory subunit (subunit A), and a variety of regulatory subunits such as subunits B (the R2/B/PR55/B55, R3/B''/PR72/PR130/PR59 and R5/B'/B56 families).

Its function is as follows. The B regulatory subunit may modulate substrate selectivity and catalytic activity, and may also direct the localization of the catalytic enzyme to a particular subcellular compartment. This chain is Serine/threonine protein phosphatase 2A 55 kDa regulatory subunit B beta isoform, found in Oryza sativa subsp. japonica (Rice).